The primary structure comprises 1159 residues: Nucleoporin nup124 (1159 aa).

The segment covering 1–13 has biased composition (polar residues); it reads MPPVSKNTRTSSK. 4 disordered regions span residues 1-28, 44-77, 106-125, and 183-273; these read MPPV…SSRP, FTSG…ELTP, HTNT…TNSP, and TLNI…RRRR. 2 stretches are compositionally biased toward basic and acidic residues: residues 48–62 and 106–119; these read LDEK…DRKS and HTNT…KQKQ. Serine 211 is modified (phosphoserine). The segment covering 226-239 has biased composition (polar residues); it reads NEPSAKQNKSFSGN. Residues 240–260 show a composition bias toward basic and acidic residues; it reads DSHKSLTDIRDKENGETEVSA. The segment covering 263-273 has biased composition (basic residues); it reads HVPHRSSRRRR. Serine 380 bears the Phosphoserine mark. Residues 426 to 441 are compositionally biased toward basic and acidic residues; that stretch reads DNKTFEHQPLSKDTEA. 3 disordered regions span residues 426-715, 746-780, and 794-1159; these read DNKT…NTEN, EEAV…AVPS, and EKTN…RRKR. The segment covering 442 to 453 has biased composition (polar residues); it reads PKSQFSSSPTKE. Serine 465 carries the post-translational modification Phosphoserine. Residues 480–494 show a composition bias toward basic and acidic residues; it reads FKFEPKTEATTDKKL. Polar residues predominate over residues 528–549; the sequence is PSKTQETPSITENKPSFFSQLS. The residue at position 546 (serine 546) is a Phosphoserine. A compositionally biased stretch (basic and acidic residues) spans 550 to 560; that stretch reads PKREETEKKDN. Residues 590 to 626 are compositionally biased toward polar residues; the sequence is PTFNFSLNNASSTQDTTKPTLQFNFGSSFGKPTSNIF. Over residues 642–656 the composition is skewed to low complexity; the sequence is ASESKPSAPESKPSS. 2 stretches are compositionally biased toward polar residues: residues 657–672 and 696–715; these read GFGN…FNLT and DSLS…NTEN. The segment covering 746–758 has biased composition (basic and acidic residues); sequence EEAVKQKETEKEV. 2 stretches are compositionally biased toward polar residues: residues 771–780 and 798–814; these read SVSSNNAVPS and ENNI…NATK. Positions 815–824 are enriched in basic and acidic residues; it reads RTLEQTEDAK. Residues 830–861 are compositionally biased toward polar residues; sequence FGSTTEQANKKASTSNETTKPQLDTSSKTDGV. The span at 863 to 879 shows a compositional bias: low complexity; sequence ANAPFSFASAFNAPKPS. A compositionally biased stretch (polar residues) spans 880–908; the sequence is TNTADGKDSASNLTTPSPAFSFGNNSGVK. Positions 909-926 are enriched in low complexity; that stretch reads ASSNNNPSTNSSTAPFSF. The span at 927-947 shows a compositional bias: polar residues; that stretch reads GTSNKPAFSFGSATSKTTSEG. A compositionally biased stretch (low complexity) spans 948-963; that stretch reads TAPAASASAPAPTTSA. Composition is skewed to polar residues over residues 1001–1019, 1042–1064, 1074–1087, 1095–1108, and 1116–1144; these read GANN…TPAP, ITNT…NAGS, NTPN…NASQ, EPSN…STGF, and SAFN…QTNA.

To yeast nucleoporins NUP1 and NUP2.

It is found in the nucleus. The protein localises to the nuclear pore complex. Functionally, nucleoporins may be involved in both binding and translocation of the proteins during nucleocytoplasmic transport. In S.pombe it is required for the nuclear localization of retrotransposon tf1. The chain is Nucleoporin nup124 (nup124) from Schizosaccharomyces pombe (strain 972 / ATCC 24843) (Fission yeast).